Here is a 295-residue protein sequence, read N- to C-terminus: Glutamate-binding protein GluB (295 aa).

An N-terminal signal peptide occupies residues 1 to 26 (MSAKRTFTRIGAILGATALAGVTLTA). A lipid anchor (N-palmitoyl cysteine) is attached at C27. C27 is lipidated: S-diacylglycerol cysteine.

The protein belongs to the bacterial solute-binding protein 3 family. The complex is composed of two ATP-binding proteins (GluA), two transmembrane proteins (GluC and GluD) and a solute-binding protein (GluB).

The protein localises to the cell membrane. Binding of glutamate or asparatate induces a higher thermal stability of the protein structure. Its function is as follows. Part of the ABC transporter complex GluABCD involved in glutamate uptake. Binds glutamate with a high affinity. Also binds aspartate with high affinity, suggesting that GluB could be involved in the transport of both amino acid residues into the cell. The sequence is that of Glutamate-binding protein GluB from Corynebacterium glutamicum (strain ATCC 13032 / DSM 20300 / JCM 1318 / BCRC 11384 / CCUG 27702 / LMG 3730 / NBRC 12168 / NCIMB 10025 / NRRL B-2784 / 534).